The following is a 148-amino-acid chain: UPF0260 protein KPK_1978 (148 aa).

It belongs to the UPF0260 family.

The protein is UPF0260 protein KPK_1978 of Klebsiella pneumoniae (strain 342).